Consider the following 764-residue polypeptide: WFHGNLSGKEAEKLILERGKNGSFLVRESQSKPGDFVLSVRTDDKVTHVMIRWQDKKYDVGGGESFATLSELIEHYKRHPMVETCGTVVHLRQPFNATRITAAGINARVEQLVKGGFWEEFESLQQDSRDTFSRHEGYKDENRLKNRYHDHTRVKLQDVERSAPGAEYINANYIRLPTDGDLYNMSSSSESLNSTVAACPACTAAQTQRNCPNCHLLNKTCVKCAVKSATLPTNCATCNRKSDSLSKHKRSESMSASANASAAGTGPGTPTAAGNTSAAAALNGCLAVLLKKHCGDASPPPSTTSSCSGPLTGSLLNGEGNQFKTYIATQGCLANTKTDFWNMIWQENTRVIVMTTKEIERGKTKCERYWPDEGQCKQFGHAKVHCIKENSTNDYTLREFLFSWRDKPERRIYHYHFQVWPDHGVPADPGCVLNFLQDVNTKQSSLAQAGEKPGPICVHCSAGIGRTGTFIVIDMILDQIVRNGLDTEIDIQRTIQMVRSQRSGMVQTEAQYKFVYYAVQHYIQTLIARKRAEEQSLQVGREYTNIKYTGEIGNDSQRSPLPPAISNLSLVSCKSAVAEPLTAAAAAAAVAANAGNKHAAKLQPPLPPLGASNNNNSSGNSGSYCNSSSSTSTAQHNGVVSSSNNCSSGSGSANSSNANGNGNILGNGSNMRKSNFYSDSLAALKLQQQQLHDAATAAAAAALASAAAPAATTTAASASAAAAAAAAAKYKNIPKDMNSLRQPHAAYVAAAPALPPPPTPPRKT.

An SH2 domain is found at 1-95 (WFHGNLSGKE…GTVVHLRQPF (95 aa)). The Tyrosine-protein phosphatase domain occupies 117-522 (FWEEFESLQQ…KFVYYAVQHY (406 aa)). The interval 174-325 (IRLPTDGDLY…LNGEGNQFKT (152 aa)) is PTPase insert (Cys/Ser-rich). Residues 246–273 (SKHKRSESMSASANASAAGTGPGTPTAA) are disordered. The span at 255–273 (SASANASAAGTGPGTPTAA) shows a compositional bias: low complexity. Substrate contacts are provided by residues D422, 460–466 (CSAGIGR), and Q507. The Phosphocysteine intermediate role is filled by C460. The segment at 599-666 (AAKLQPPLPP…NANGNGNILG (68 aa)) is disordered. Over residues 612-666 (SNNNNSSGNSGSYCNSSSSTSTAQHNGVVSSSNNCSSGSGSANSSNANGNGNILG) the composition is skewed to low complexity.

It belongs to the protein-tyrosine phosphatase family. Non-receptor class subfamily.

The protein localises to the cytoplasm. It carries out the reaction O-phospho-L-tyrosyl-[protein] + H2O = L-tyrosyl-[protein] + phosphate. Required in all receptor tyrosine kinase signaling pathways. Functions downstream of the receptor tyrosine kinase torso, acting in concert with D-Raf via tailless. Also functions downstream of Egfr (epidermal growth factor receptor) and btl (fibroblast growth factor receptor). The SH2 domain suggests that csw effects its role by mediating heteromeric protein interactions. Maternally required for normal determination of cell fates at the termini of the embryo. Required for cell fate specification of the ventral ectoderm, in the developing embryonic CNS and for embryonic tracheal cell migration. Functions during imaginal development for proper formation of adult structures such as eyes, aristae, L5 wing vein and the tarsal claw. In Drosophila virilis (Fruit fly), this protein is Tyrosine-protein phosphatase corkscrew (csw).